Consider the following 340-residue polypeptide: Phosphate carrier protein, mitochondrial (340 aa).

Residues 1–27 (MSVFSQLAESSKQNPFSLPVRSGNCAS) constitute a mitochondrion transit peptide. Solcar repeat units lie at residues 41-125 (KYYA…FKNV), 138-222 (YRTS…TVEA), and 239-317 (EQLV…VKVA). The next 6 helical transmembrane spans lie at 47 to 67 (ALGG…LDLV), 95 to 114 (RALV…QGLG), 141 to 161 (SLYL…LAPM), 200 to 220 (PLWM…EKTV), 241 to 261 (LVVT…VSHP), and 297 to 317 (IIMI…VKVA).

This sequence belongs to the mitochondrial carrier (TC 2.A.29) family.

It localises to the mitochondrion inner membrane. Functionally, transport of phosphate groups from the cytosol to the mitochondrial matrix. The chain is Phosphate carrier protein, mitochondrial from Caenorhabditis elegans.